The following is a 188-amino-acid chain: Elongation factor P-like protein (188 aa).

The protein belongs to the elongation factor P family.

The sequence is that of Elongation factor P-like protein from Xanthomonas oryzae pv. oryzae (strain MAFF 311018).